Consider the following 244-residue polypeptide: Phosphoadenosine 5'-phosphosulfate reductase (244 aa).

C239 (nucleophile; cysteine thiosulfonate intermediate) is an active-site residue.

This sequence belongs to the PAPS reductase family. CysH subfamily.

It is found in the cytoplasm. It carries out the reaction [thioredoxin]-disulfide + sulfite + adenosine 3',5'-bisphosphate + 2 H(+) = [thioredoxin]-dithiol + 3'-phosphoadenylyl sulfate. The protein operates within sulfur metabolism; hydrogen sulfide biosynthesis; sulfite from sulfate: step 3/3. In terms of biological role, catalyzes the formation of sulfite from phosphoadenosine 5'-phosphosulfate (PAPS) using thioredoxin as an electron donor. In Salmonella agona (strain SL483), this protein is Phosphoadenosine 5'-phosphosulfate reductase.